The primary structure comprises 138 residues: Probable phospholipase A2 homolog 1 (138 aa).

The first 21 residues, 1–21 (MPPRSPLLALVFLAAGVLSSA), serve as a signal peptide directing secretion. 6 disulfides stabilise this stretch: Cys-29–Cys-56, Cys-33–Cys-62, Cys-38–Cys-109, Cys-49–Cys-69, Cys-68–Cys-93, and Cys-75–Cys-86. 3 residues coordinate Ca(2+): Tyr-48, Gly-50, and Trp-53. The active site involves His-72. Asp-73 contacts Ca(2+).

The protein belongs to the phospholipase A2 family. The cofactor is Ca(2+).

The protein localises to the secreted. The catalysed reaction is a 1,2-diacyl-sn-glycero-3-phosphocholine + H2O = a 1-acyl-sn-glycero-3-phosphocholine + a fatty acid + H(+). Its function is as follows. PA2 catalyzes the calcium-dependent hydrolysis of the 2-acyl groups in 3-sn-phosphoglycerides. Releases lysophospholipids (LPLs) and free fatty acids (FFAs) from membrane phospholipids in response to hormones and other external stimuli. This Oryza sativa subsp. japonica (Rice) protein is Probable phospholipase A2 homolog 1 (PLA2-I).